The chain runs to 351 residues: Histidinol-phosphate aminotransferase (351 aa).

Position 209 is an N6-(pyridoxal phosphate)lysine (Lys209).

This sequence belongs to the class-II pyridoxal-phosphate-dependent aminotransferase family. Histidinol-phosphate aminotransferase subfamily. In terms of assembly, homodimer. The cofactor is pyridoxal 5'-phosphate.

It catalyses the reaction L-histidinol phosphate + 2-oxoglutarate = 3-(imidazol-4-yl)-2-oxopropyl phosphate + L-glutamate. The protein operates within amino-acid biosynthesis; L-histidine biosynthesis; L-histidine from 5-phospho-alpha-D-ribose 1-diphosphate: step 7/9. This Chromohalobacter salexigens (strain ATCC BAA-138 / DSM 3043 / CIP 106854 / NCIMB 13768 / 1H11) protein is Histidinol-phosphate aminotransferase.